Consider the following 464-residue polypeptide: Cell division protein FtsA (464 aa).

The tract at residues 392–464 (EVIESDKDSE…FKKLMKSLFE (73 aa)) is disordered. The span at 416–455 (KKENDEVAPEAPREESYEDRENHLEDEQQTEGKAKEESKF) shows a compositional bias: basic and acidic residues.

The protein belongs to the FtsA/MreB family. Self-interacts. Interacts with FtsZ.

The protein localises to the cell membrane. In terms of biological role, cell division protein that is involved in the assembly of the Z ring. May serve as a membrane anchor for the Z ring. This is Cell division protein FtsA from Staphylococcus epidermidis (strain ATCC 35984 / DSM 28319 / BCRC 17069 / CCUG 31568 / BM 3577 / RP62A).